Reading from the N-terminus, the 89-residue chain is Putative membrane protein insertion efficiency factor (89 aa).

Belongs to the UPF0161 family.

The protein localises to the cell inner membrane. Functionally, could be involved in insertion of integral membrane proteins into the membrane. This chain is Putative membrane protein insertion efficiency factor, found in Petrotoga mobilis (strain DSM 10674 / SJ95).